A 434-amino-acid chain; its full sequence is Oxysterol-binding protein homolog 5 (434 aa).

The segment at 18 to 371 is OSBP-related domain (ORD); sequence SSFNGDLSSL…KQVDYMNENT (354 aa). 24-29 contributes to the a 1,2-diacyl-sn-glycero-3-phospho-(1D-myo-inositol 4-phosphate) binding site; that stretch reads LSSLSA. 20-hydroxycholesterol is bound at residue Gln96. A 25-hydroxycholesterol-binding site is contributed by Gln96. 7beta-hydroxycholesterol-binding residues include Gln96 and Arg100. Cholesterol is bound at residue Gln96. Gln96 contributes to the ergosterol binding site. A 1,2-diacyl-sn-glycero-3-phospho-(1D-myo-inositol 4-phosphate) contacts are provided by residues 109–112, 143–144, Lys335, Glu339, and Arg343; these read KPLN and HH. Ser389 carries the post-translational modification Phosphoserine.

The protein belongs to the OSBP family.

The protein localises to the vacuole membrane. Its subcellular location is the bud neck. In terms of biological role, lipid transport protein (LTP) involved in non-vesicular transfer of lipids between membranes. Functions in phosphoinositide-coupled directional transport of various lipids by carrying the lipid molecule in a hydrophobic pocket and transferring it between membranes through the cytosol. Involved in maintenance of intracellular sterol distribution and homeostasis. Plays a role in ergosterol synthesis. Binds and transports sterol. May be involved in ergosterol transport from the plasma membrane (PM) to the ER. This Saccharomyces cerevisiae (strain ATCC 204508 / S288c) (Baker's yeast) protein is Oxysterol-binding protein homolog 5.